A 376-amino-acid chain; its full sequence is uncharacterized protein (376 aa).

A helical transmembrane segment spans residues 19–39 (FVLISLILLLNLGLLLGIQIY).

To S.pombe SpAC5H10.12c.

It localises to the cytoplasm. Its subcellular location is the nucleus. It is found in the membrane. This is an uncharacterized protein from Schizosaccharomyces pombe (strain 972 / ATCC 24843) (Fission yeast).